The chain runs to 92 residues: Defensin-like protein 294 (92 aa).

An N-terminal signal peptide occupies residues 1-26; that stretch reads MASRATSLFIFFFLISCTFMLLETNA. 3 cysteine pairs are disulfide-bonded: Cys-63–Cys-82, Cys-69–Cys-87, and Cys-75–Cys-89.

Belongs to the DEFL family.

Its subcellular location is the secreted. This chain is Defensin-like protein 294, found in Arabidopsis thaliana (Mouse-ear cress).